Reading from the N-terminus, the 197-residue chain is Protein GrpE (197 aa).

Residues 1–39 (MSSKEQKTPEGQAPEEIIMDQHEEIEAVEPEASAEQVDP) are disordered.

This sequence belongs to the GrpE family. Homodimer.

It localises to the cytoplasm. Participates actively in the response to hyperosmotic and heat shock by preventing the aggregation of stress-denatured proteins, in association with DnaK and GrpE. It is the nucleotide exchange factor for DnaK and may function as a thermosensor. Unfolded proteins bind initially to DnaJ; upon interaction with the DnaJ-bound protein, DnaK hydrolyzes its bound ATP, resulting in the formation of a stable complex. GrpE releases ADP from DnaK; ATP binding to DnaK triggers the release of the substrate protein, thus completing the reaction cycle. Several rounds of ATP-dependent interactions between DnaJ, DnaK and GrpE are required for fully efficient folding. The sequence is that of Protein GrpE from Escherichia coli O45:K1 (strain S88 / ExPEC).